Consider the following 212-residue polypeptide: WAP four-disulfide core domain protein 1 (212 aa).

An N-terminal signal peptide occupies residues 1 to 26 (MGSCDRKALWALSFLLLLLGSSSVQG). The tract at residues 43–62 (EEVAATGSRQPHADRCPPPP) is disordered. The 50-residue stretch at 51–100 (RQPHADRCPPPPRTLPPGACQATRCQSDSECPRHRRCCYNGCAYACLEAV) folds into the WAP domain. 4 cysteine pairs are disulfide-bonded: Cys-58–Cys-88, Cys-70–Cys-92, Cys-75–Cys-87, and Cys-81–Cys-96. The tract at residues 191–212 (EYPEGDSKYVAEPGKGQQRHFP) is disordered.

Vascular smooth muscle and prostate. Periacinar ring.

It is found in the secreted. Functionally, has growth inhibitory activity. In Rattus norvegicus (Rat), this protein is WAP four-disulfide core domain protein 1 (Wfdc1).